The following is a 71-amino-acid chain: Small ribosomal subunit protein bS21 (71 aa).

The segment at 48–71 (ENATLAKRHAKRNARENARNTRLY) is disordered. The segment covering 60 to 71 (NARENARNTRLY) has biased composition (basic and acidic residues).

This sequence belongs to the bacterial ribosomal protein bS21 family.

The protein is Small ribosomal subunit protein bS21 of Haemophilus influenzae (strain 86-028NP).